Consider the following 164-residue polypeptide: Transcription elongation factor GreA (164 aa).

Positions Arg-12–Glu-38 form a coiled coil.

The protein belongs to the GreA/GreB family.

Necessary for efficient RNA polymerase transcription elongation past template-encoded arresting sites. The arresting sites in DNA have the property of trapping a certain fraction of elongating RNA polymerases that pass through, resulting in locked ternary complexes. Cleavage of the nascent transcript by cleavage factors such as GreA or GreB allows the resumption of elongation from the new 3'terminus. GreA releases sequences of 2 to 3 nucleotides. This Solidesulfovibrio magneticus (strain ATCC 700980 / DSM 13731 / RS-1) (Desulfovibrio magneticus) protein is Transcription elongation factor GreA.